Here is a 138-residue protein sequence, read N- to C-terminus: Acidic phospholipase A2 Cvv-E6b (138 aa).

Residues 1–16 (MRTLWILAVLLLGVEG) form the signal peptide. Disulfide bonds link C42-C131, C44-C60, C59-C111, C65-C138, C66-C104, C73-C97, and C91-C102. Ca(2+) contacts are provided by Y43, G45, and G47. H63 is an active-site residue. Ca(2+) is bound at residue D64. Residue D105 is part of the active site.

It depends on Ca(2+) as a cofactor. In terms of tissue distribution, expressed by the venom gland.

The protein resides in the secreted. It carries out the reaction a 1,2-diacyl-sn-glycero-3-phosphocholine + H2O = a 1-acyl-sn-glycero-3-phosphocholine + a fatty acid + H(+). Its function is as follows. Snake venom phospholipase A2 (PLA2) that shows very low inhibition of ADP-induced platelet aggregation in platelet-rich plasma of human, rabbit and guinea pig. PLA2 catalyzes the calcium-dependent hydrolysis of the 2-acyl groups in 3-sn-phosphoglycerides. This chain is Acidic phospholipase A2 Cvv-E6b, found in Crotalus viridis viridis (Prairie rattlesnake).